Here is a 56-residue protein sequence, read N- to C-terminus: uncharacterized protein (56 aa).

This is an uncharacterized protein from Orgyia pseudotsugata (Douglas-fir tussock moth).